The following is a 246-amino-acid chain: TATA-box-binding protein (246 aa).

A disordered region spans residues 1 to 27 (MSSDKTSQQTFKLAPNNSVAQSNSIDQ). Tandem repeats lie at residues 53 to 129 (LQNI…AKII) and 143 to 220 (IQNI…YWVL).

This sequence belongs to the TBP family. Belongs to the TFIID complex together with the TBP-associated factors (TAFs). Binds DNA as monomer.

It localises to the nucleus. Its function is as follows. General transcription factor that functions at the core of the DNA-binding multiprotein factor TFIID. Binding of TFIID to the TATA box is the initial transcriptional step of the pre-initiation complex (PIC), playing a role in the activation of eukaryotic genes transcribed by RNA polymerase II. The protein is TATA-box-binding protein of Tetrahymena thermophila.